A 91-amino-acid chain; its full sequence is Translation initiation factor IF-1 (91 aa).

The 72-residue stretch at 1-72 folds into the S1-like domain; it reads MAKEELLEFE…DRGRINFRHK (72 aa). Positions 70-91 are disordered; the sequence is RHKAEGNAPPPGARRQQNFRRR.

It belongs to the IF-1 family. In terms of assembly, component of the 30S ribosomal translation pre-initiation complex which assembles on the 30S ribosome in the order IF-2 and IF-3, IF-1 and N-formylmethionyl-tRNA(fMet); mRNA recruitment can occur at any time during PIC assembly.

The protein resides in the cytoplasm. Functionally, one of the essential components for the initiation of protein synthesis. Stabilizes the binding of IF-2 and IF-3 on the 30S subunit to which N-formylmethionyl-tRNA(fMet) subsequently binds. Helps modulate mRNA selection, yielding the 30S pre-initiation complex (PIC). Upon addition of the 50S ribosomal subunit IF-1, IF-2 and IF-3 are released leaving the mature 70S translation initiation complex. This Azorhizobium caulinodans (strain ATCC 43989 / DSM 5975 / JCM 20966 / LMG 6465 / NBRC 14845 / NCIMB 13405 / ORS 571) protein is Translation initiation factor IF-1.